The sequence spans 190 residues: MNNNYPLGSIAQAVDVLKNEEVIAYPTEAVFGVGCDPDSETAVTRLLELKQRPVEKGLILIAANFEQLKPYIDDSMLTEQQRNTIFSAWPGPVTFVFPALPSTPSWLTGRFDSLAVRVTDHPLVVELCETFGKPLVSTSANLTGLPPCRTSQEVLAQFGDGFPVVVGETGGRLNPSEIRDALTGERFRQG.

The YrdC-like domain occupies 7-190 (LGSIAQAVDV…ALTGERFRQG (184 aa)).

Belongs to the SUA5 family. TsaC subfamily.

Its subcellular location is the cytoplasm. It carries out the reaction L-threonine + hydrogencarbonate + ATP = L-threonylcarbamoyladenylate + diphosphate + H2O. Required for the formation of a threonylcarbamoyl group on adenosine at position 37 (t(6)A37) in tRNAs that read codons beginning with adenine. Catalyzes the conversion of L-threonine, HCO(3)(-)/CO(2) and ATP to give threonylcarbamoyl-AMP (TC-AMP) as the acyladenylate intermediate, with the release of diphosphate. This is Threonylcarbamoyl-AMP synthase from Enterobacter sp. (strain 638).